The chain runs to 113 residues: Death-associated protein-like 1.S (113 aa).

Positions 1 to 53 (MTKELKVQSSPQALKAGHLPAVKAGGMRVSKKQGNDENSAPEKNAKKTLQEKP) are disordered.

It belongs to the DAP-DAPL1 family. Associates with ribosomes; preventing translation. Interacts with eiF5a (eif5a and eif5a2); preventing translation.

Its function is as follows. Ribosome-binding protein that promotes ribosome hibernation, a process during which ribosomes are stabilized in an inactive state and preserved from proteasomal degradation. Acts via its association with eiF5a (eif5a and eif5a2) at the polypeptide exit tunnel of the ribosome, preventing mRNA translation. Plays a key role in ribosome hibernation in the mature egg by preventing mRNA translation, leading to ribosome inactivation. Ribosomes, which are produced in large quantities during oogenesis, are stored and translationally repressed in the egg and early embryo. The polypeptide is Death-associated protein-like 1.S (dapl1.S) (Xenopus laevis (African clawed frog)).